The chain runs to 180 residues: Flavodoxin 2 (180 aa).

The Flavodoxin-like domain maps to 4–173 (IGLFFGSNTG…RVAAWLAQIA (170 aa)). FMN-binding positions include 10–15 (SNTGKT), T57, G61, D99, 106–108 (NYL), and D155.

FMN is required as a cofactor.

In terms of biological role, flavodoxins are low-potential electron donors to a number of redox enzymes. NifF is the electron donor to nitrogenase, and is thus implicated in nitrogen fixation. Does not function as an electron donor to nitrite reductase. The protein is Flavodoxin 2 of Azotobacter vinelandii.